Here is a 249-residue protein sequence, read N- to C-terminus: Methionine aminopeptidase 2 (249 aa).

Substrate is bound at residue His-76. A divalent metal cation is bound by residues Asp-94, Asp-105, and His-168. His-175 contributes to the substrate binding site. A divalent metal cation is bound by residues Glu-202 and Glu-233.

Monomer. The cofactor is Co(2+). Requires Zn(2+) as cofactor. It depends on Mn(2+) as a cofactor. Fe(2+) is required as a cofactor.

Its subcellular location is the cytoplasm. The catalysed reaction is Release of N-terminal amino acids, preferentially methionine, from peptides and arylamides.. Its function is as follows. Removes the N-terminal methionine from nascent proteins. The N-terminal methionine is often cleaved when the second residue in the primary sequence is small and uncharged (Met-Ala-, Cys, Gly, Pro, Ser, Thr, or Val). Requires deformylation of the N(alpha)-formylated initiator methionine before it can be hydrolyzed. The protein is Methionine aminopeptidase 2 of Bacillus subtilis (strain 168).